Here is a 279-residue protein sequence, read N- to C-terminus: Thymidylate synthase (279 aa).

141 to 142 is a dUMP binding site; that stretch reads RR. Cysteine 161 acts as the Nucleophile in catalysis. DUMP contacts are provided by residues 181 to 184, asparagine 192, and 222 to 224; these read RSND and HVY. A (6R)-5,10-methylene-5,6,7,8-tetrahydrofolate-binding site is contributed by aspartate 184. Alanine 278 lines the (6R)-5,10-methylene-5,6,7,8-tetrahydrofolate pocket.

It belongs to the thymidylate synthase family. In terms of assembly, homodimer.

The catalysed reaction is dUMP + (6R)-5,10-methylene-5,6,7,8-tetrahydrofolate = 7,8-dihydrofolate + dTMP. It participates in pyrimidine metabolism; dTTP biosynthesis. In terms of biological role, provides the sole de novo source of dTMP for DNA biosynthesis. The sequence is that of Thymidylate synthase (thyP3) from Bacillus subtilis (Bacteriophage phi-3T).